The primary structure comprises 784 residues: Kinesin-like protein Klp68D (784 aa).

Residues 19 to 344 enclose the Kinesin motor domain; it reads CVQVVVRCRP…LRYASRAKSI (326 aa). Residue 106–113 coordinates ATP; sequence GQTGTGKT. Residues 351–385 adopt a coiled-coil conformation; the sequence is NEDPQDAKLKEYQEEIERLKRLIGPQQQQRSEKQV. 3 disordered regions span residues 371 to 449, 605 to 652, and 742 to 784; these read RLIG…ERER, KFSS…PSSL, and IKSS…LVNK. Residues 386 to 396 show a composition bias toward basic residues; it reads TAKKQRVKKPK. Acidic residues predominate over residues 416 to 428; that stretch reads PVEDDSDPEGAES. The stretch at 426–582 forms a coiled coil; sequence AESESDKENE…KRQLLIIDNF (157 aa). Over residues 429–449 the composition is skewed to basic and acidic residues; it reads ESDKENEAEVAKSNEELERER. Residues 622–634 are compositionally biased toward basic residues; sequence SSKRPVSHPQRRR. The segment covering 769-778 has biased composition (low complexity); the sequence is KKPASAYPKA.

It belongs to the TRAFAC class myosin-kinesin ATPase superfamily. Kinesin family. Kinesin II subfamily. In terms of tissue distribution, expressed primarily in the central nervous system and in a subset of the peripheral nervous system during embryogenesis.

The protein localises to the cytoplasm. The protein resides in the cytoskeleton. Functionally, plus-end directed microtubule motor that may be used for anterograde axonal transport and could conceivably move cargos in fly neurons different than those moved by kinesin heavy chain or other plus-end directed motors. In Drosophila melanogaster (Fruit fly), this protein is Kinesin-like protein Klp68D (Klp68D).